The primary structure comprises 441 residues: Protein arginine methyltransferase NDUFAF7, mitochondrial (441 aa).

Residues 1-46 (MNFLAAAGVRRLCAMRAVLPCLWRGKYFSSGNEPAENNTVTPMLRH) constitute a mitochondrion transit peptide. Residues 415–434 (GRNHQTNARQSKPSPSPVAG) form a disordered region. A compositionally biased stretch (polar residues) spans 418 to 427 (HQTNARQSKP).

It belongs to the NDUFAF7 family. In terms of assembly, interacts with NDUFS2.

It localises to the mitochondrion. It catalyses the reaction L-arginyl-[protein] + 2 S-adenosyl-L-methionine = N(omega),N(omega)'-dimethyl-L-arginyl-[protein] + 2 S-adenosyl-L-homocysteine + 2 H(+). In terms of biological role, arginine methyltransferase involved in the assembly or stability of mitochondrial NADH:ubiquinone oxidoreductase complex (complex I). Acts by mediating symmetric dimethylation of 'Arg-118' of NDUFS2 after it assembles into the complex I, stabilizing the early intermediate complex. This is Protein arginine methyltransferase NDUFAF7, mitochondrial from Bos taurus (Bovine).